A 61-amino-acid polypeptide reads, in one-letter code: Small ribosomal subunit protein uS14 (61 aa).

Zn(2+)-binding residues include C24, C27, C40, and C43.

This sequence belongs to the universal ribosomal protein uS14 family. Zinc-binding uS14 subfamily. In terms of assembly, part of the 30S ribosomal subunit. Contacts proteins S3 and S10. It depends on Zn(2+) as a cofactor.

Binds 16S rRNA, required for the assembly of 30S particles and may also be responsible for determining the conformation of the 16S rRNA at the A site. This is Small ribosomal subunit protein uS14 from Lachnospira eligens (strain ATCC 27750 / DSM 3376 / VPI C15-48 / C15-B4) (Eubacterium eligens).